The chain runs to 896 residues: Phosphatidate phosphatase LPIN2 (896 aa).

An N-LIP region spans residues 1 to 108; that stretch reads MNYVGQLAGQ…LPAYLATSPI (108 aa). Ser-106 is modified (phosphoserine). Residues 120–208 form a disordered region; that stretch reads TPLVKSGGDE…SSNASLKEEE (89 aa). Positions 152 to 162 are enriched in basic residues; that stretch reads VKKKKRRRKKY. The Nuclear localization signal signature appears at 153–158; it reads KKKKRR. Phosphoserine occurs at positions 174, 186, 187, 243, and 303. Disordered stretches follow at residues 370–405 and 420–459; these read AEAP…DIYL and FPKS…TECL. The segment covering 387 to 396 has biased composition (basic residues); that stretch reads KKKGVHKRSQ. Residues 426-448 show a composition bias toward polar residues; the sequence is EPGSRQWPESDTLSGSQSPQSVG. Residue Ser-566 is modified to Phosphoserine. Positions 569 to 579 are enriched in basic and acidic residues; sequence KQLPESKEGKS. The segment at 569-636 is disordered; it reads KQLPESKEGK…LSHGSTTSYK (68 aa). Residues 604–617 are compositionally biased toward acidic residues; sequence SSSDEGSQELEESI. Residues 635 to 837 form a C-LIP region; the sequence is YKKSLRLSSD…RIFTVNPKGE (203 aa). Positions 689–693 match the DXDXT motif motif; it reads DIDGT. The LXXIL motif motif lies at 700–704; the sequence is LGQIL.

It belongs to the lipin family. Mg(2+) is required as a cofactor. Expressed in liver, lung, kidney, placenta, spleen, thymus, lymph node, prostate, testes, small intestine, and colon.

The protein localises to the nucleus. Its subcellular location is the cytoplasm. It is found in the cytosol. It localises to the endoplasmic reticulum membrane. It carries out the reaction a 1,2-diacyl-sn-glycero-3-phosphate + H2O = a 1,2-diacyl-sn-glycerol + phosphate. With respect to regulation, inhibited by N-ethylmaleimide. Functionally, acts as a magnesium-dependent phosphatidate phosphatase enzyme which catalyzes the conversion of phosphatidic acid to diacylglycerol during triglyceride, phosphatidylcholine and phosphatidylethanolamine biosynthesis in the endoplasmic reticulum membrane. Plays important roles in controlling the metabolism of fatty acids at different levels. Also acts as a nuclear transcriptional coactivator for PPARGC1A to modulate lipid metabolism. The polypeptide is Phosphatidate phosphatase LPIN2 (Homo sapiens (Human)).